The sequence spans 298 residues: Syntaxin-125 (298 aa).

An N-acetylmethionine modification is found at methionine 1. Topologically, residues 1–274 (MNDLFSNSFK…KSSRKWTCYA (274 aa)) are cytoplasmic. Residues 25–155 (TMNLDKFFED…NEYKETVERR (131 aa)) adopt a coiled-coil conformation. The region spanning 198–260 (ISEIQERHDA…RRGTDQLQDA (63 aa)) is the t-SNARE coiled-coil homology domain. A helical; Anchor for type IV membrane protein membrane pass occupies residues 275-295 (IILFIVIFILLLIPLLPHIML). The Vesicular segment spans residues 296–298 (MLK).

The protein belongs to the syntaxin family. As to quaternary structure, part of the t-SNARE complex.

The protein localises to the membrane. Functionally, vesicle trafficking protein that functions in the secretory pathway. The protein is Syntaxin-125 (SYP125) of Arabidopsis thaliana (Mouse-ear cress).